A 167-amino-acid polypeptide reads, in one-letter code: Homeobox protein EgHBX3 (167 aa).

A DNA-binding region (homeobox) is located at residues 80–139 (SQSKRRVLFNKFQISQLEKRLKQRYLTAQERQELAHTIGLTPTQVKIWFQNHAYKMKRLF).

This sequence belongs to the NK-2 homeobox family.

It localises to the nucleus. In Echinococcus granulosus (Hydatid tapeworm), this protein is Homeobox protein EgHBX3 (HBX3).